The chain runs to 326 residues: Protein FAM50 homolog (326 aa).

Residues 77–111 (ISNRDLQVARGDQSSSTQSKDSQEAREKEEHVAKH) are disordered. Basic and acidic residues predominate over residues 97 to 109 (DSQEAREKEEHVA).

Belongs to the FAM50 family.

The polypeptide is Protein FAM50 homolog (Caenorhabditis elegans).